The sequence spans 182 residues: T-cell surface glycoprotein CD3 gamma chain (182 aa).

Positions Met1 to Ala22 are cleaved as a signal peptide. Residues Gln23 to Ser116 are Extracellular-facing. The 58-residue stretch at Gln37–Ser94 folds into the Ig-like domain. A disulfide bond links Cys46 and Cys87. Residues Asn52 and Asn92 are each glycosylated (N-linked (GlcNAc...) asparagine). Residues Gly117–Ala137 traverse the membrane as a helical segment. Residues Gly138–Asn182 are Cytoplasmic-facing. Residue Ser145 is modified to Phosphoserine. Residue Ser148 is modified to Phosphoserine; by PKC. In terms of domain architecture, ITAM spans Asp149–Asn177. The Di-leucine motif motif lies at Leu153–Leu154.

In terms of assembly, the TCR-CD3 complex is composed of a CD3D/CD3E and a CD3G/CD3E heterodimers that preferentially associate with TCRalpha and TCRbeta, respectively, to form TCRalpha/CD3E/CD3G and TCRbeta/CD3G/CD3E trimers. In turn, the hexamer interacts with CD3Z homodimer to form the TCR-CD3 complex. Alternatively, TCRalpha and TCRbeta can be replaced by TCRgamma and TCRdelta. In terms of processing, phosphorylated on Tyr residues after T-cell receptor triggering by LCK in association with CD4/CD8. Phosphorylated also by PKC; leading to the TCR complex down-regulation. Post-translationally, phosphorylated on Tyr residues after T-cell receptor triggering by LCK in association with CD4/CD8.

The protein localises to the cell membrane. Part of the TCR-CD3 complex present on T-lymphocyte cell surface that plays an essential role in adaptive immune response. When antigen presenting cells (APCs) activate T-cell receptor (TCR), TCR-mediated signals are transmitted across the cell membrane by the CD3 chains CD3D, CD3E, CD3G and CD3Z. All CD3 chains contain immunoreceptor tyrosine-based activation motifs (ITAMs) in their cytoplasmic domain. Upon TCR engagement, these motifs become phosphorylated by Src family protein tyrosine kinases LCK and FYN, resulting in the activation of downstream signaling pathways. In addition to this role of signal transduction in T-cell activation, CD3G plays an essential role in the dynamic regulation of TCR expression at the cell surface. Indeed, constitutive TCR cycling is dependent on the di-leucine-based (diL) receptor-sorting motif present in CD3G. This is T-cell surface glycoprotein CD3 gamma chain (CD3G) from Homo sapiens (Human).